We begin with the raw amino-acid sequence, 544 residues long: Cytochrome P450 monooxygenase verL (544 aa).

Residues valine 3–tryptophan 23 form a helical membrane-spanning segment. Cysteine 446 provides a ligand contact to heme. A disordered region spans residues glutamine 520–arginine 544.

This sequence belongs to the cytochrome P450 family. It depends on heme as a cofactor.

The protein resides in the membrane. It functions in the pathway mycotoxin biosynthesis. Its function is as follows. Cytochrome P450 monooxygenase; part of the gene cluster that mediates the biosynthesis of 11'-deoxyverticillin A, one of the dimeric epipolythiodioxopiperazines (ETPs) from the verticillin family that act as mycotoxins. 11'-deoxyverticillin A is required for normal conidiation. The nonribosomal peptide synthetase verP is speculated to be responsible for condensation of amino acids to form the carbon skeleton of verticillin, whereas the cluster-specific tailoring enzymes are involved in further modifications leading to the production of 11'-deoxyverticillin A. This Clonostachys rogersoniana protein is Cytochrome P450 monooxygenase verL.